The following is a 118-amino-acid chain: Eukaryotic translation initiation factor 4E-binding protein 1 (118 aa).

Composition is skewed to polar residues over residues 1-12 (MSGGSSCSQTPS) and 34-48 (YSTT…TTPG). Disordered stretches follow at residues 1-20 (MSGG…ATRR) and 25-48 (DGVQ…TTPG). Ser-2 is modified (N-acetylserine). A Phosphothreonine; by MTOR modification is found at Thr-37. Position 41 is a phosphothreonine (Thr-41). At Ser-44 the chain carries Phosphoserine. Thr-46 bears the Phosphothreonine; by MTOR mark. Phosphothreonine is present on Thr-50. Tyr-54 is subject to Phosphotyrosine. The YXXXXLphi motif signature appears at 54 to 60 (YDRKFLM). Residue Lys-57 forms a Glycyl lysine isopeptide (Lys-Gly) (interchain with G-Cter in ubiquitin) linkage. Residues 64-118 (NSPVTKTPPRDLPTIPGVTSPSSDEPPMEASQSHLRNSPEDKRAGGEESQFEMDI) form a disordered region. Ser-65 is subject to Phosphoserine; by DYRK2, MAPK1, MAPK3 and MTOR. Residue Thr-70 is modified to Phosphothreonine; by MTOR. Thr-77 carries the post-translational modification Phosphothreonine. A phosphoserine mark is found at Ser-83 and Ser-96. Positions 100 to 109 (NSPEDKRAGG) are enriched in basic and acidic residues. Phosphoserine; by DYRK2 is present on Ser-101. At Ser-112 the chain carries Phosphoserine. The short motif at 114–118 (FEMDI) is the TOS motif element.

This sequence belongs to the eIF4E-binding protein family. As to quaternary structure, hypophosphorylated EIF4EBP1 competes with EIF4G1/EIF4G3 to interact with EIF4E; insulin stimulated MAP-kinase (MAPK1 and MAPK3) or mTORC1 phosphorylation of EIF4EBP1 causes dissociation of the complex allowing EIF4G1/EIF4G3 to bind and consequent initiation of translation. Interacts (via TOS motif) with RPTOR; promoting phosphorylation by mTORC1. Phosphorylated on serine and threonine residues in response to insulin, EGF and PDGF. Phosphorylation at Thr-37, Thr-46, Ser-65 and Thr-70, corresponding to the hyperphosphorylated form, is regulated by mTORC1 and abolishes binding to EIF4E. In terms of processing, ubiquitinated: when eIF4E levels are low, hypophosphorylated form is ubiquitinated by the BCR(KLHL25) complex, leading to its degradation and serving as a homeostatic mechanism to maintain translation and prevent eIF4E inhibition when eIF4E levels are low. Not ubiquitinated when hyperphosphorylated (at Thr-37, Thr-46, Ser-65 and Thr-70) or associated with eIF4E.

It is found in the cytoplasm. It localises to the nucleus. Repressor of translation initiation that regulates EIF4E activity by preventing its assembly into the eIF4F complex: hypophosphorylated form competes with EIF4G1/EIF4G3 and strongly binds to EIF4E, leading to repress translation. In contrast, hyperphosphorylated form dissociates from EIF4E, allowing interaction between EIF4G1/EIF4G3 and EIF4E, leading to initiation of translation. Mediates the regulation of protein translation by hormones, growth factors and other stimuli that signal through the MAP kinase and mTORC1 pathways. The chain is Eukaryotic translation initiation factor 4E-binding protein 1 (EIF4EBP1) from Homo sapiens (Human).